Consider the following 188-residue polypeptide: Aspartic protease inhibitor 11 (188 aa).

Residue Asn-19 is glycosylated (N-linked (GlcNAc...) asparagine). Intrachain disulfides connect Cys-48/Cys-93, Cys-142/Cys-159, and Cys-150/Cys-153.

This sequence belongs to the protease inhibitor I3 (leguminous Kunitz-type inhibitor) family.

It localises to the vacuole. Functionally, inhibitor of cathepsin D (aspartic protease) and trypsin (serine protease). May protect the plant by inhibiting proteases of invading organisms. In Solanum tuberosum (Potato), this protein is Aspartic protease inhibitor 11.